The following is a 562-amino-acid chain: Protein wntless (562 aa).

The Cytoplasmic segment spans residues Met1–Lys13. Residues Leu14–Leu34 form a helical membrane-spanning segment. The Lumenal portion of the chain corresponds to Tyr35–Gln239. N-linked (GlcNAc...) asparagine glycans are attached at residues Asn58 and Asn103. The helical transmembrane segment at Val240 to Trp260 threads the bilayer. The Cytoplasmic segment spans residues Arg261 to Pro270. Residues Ala271–Leu291 traverse the membrane as a helical segment. At Glu292–Gln311 the chain is on the lumenal side. The chain crosses the membrane as a helical span at residues Gly312 to Ile332. Topologically, residues Gln333–Arg344 are cytoplasmic. A helical membrane pass occupies residues Tyr345–Cys365. The Lumenal portion of the chain corresponds to Glu366–Ser390. Residues Phe391 to Trp411 traverse the membrane as a helical segment. The Cytoplasmic segment spans residues Lys412–Arg441. Residues Phe442–Met462 form a helical membrane-spanning segment. Topologically, residues Gly463–Ser482 are lumenal. A helical transmembrane segment spans residues Ala483 to Tyr503. Residues Ala504–Asp562 are Cytoplasmic-facing.

Belongs to the wntless family. Interacts with wg; in the Golgi. Interacts with Vps35, a component of the retromer complex; wls stability is regulated by Vps35.

It is found in the presynaptic cell membrane. The protein resides in the postsynaptic cell membrane. The protein localises to the cell membrane. It localises to the endoplasmic reticulum membrane. Its subcellular location is the endosome membrane. It is found in the golgi apparatus membrane. Functionally, a segment polarity gene required for wingless (wg)-dependent patterning processes, acting in both wg-sending cells and wg-target cells. In non-neuronal cells wls directs wg secretion. The wls traffic loop encompasses the Golgi, the cell surface, an endocytic compartment and a retrograde route leading back to the Golgi, and involves clathrin-mediated endocytosis and the retromer complex (a conserved protein complex consisting of Vps35 and Vps26). In neuronal cells (the larval motorneuron NMJ), the wg signal moves across the synapse via the release of wls-containing exosome-like vesicles. Postsynaptic wls is required for the trafficking of fz2 through the fz2-interacting protein Grip. In Drosophila virilis (Fruit fly), this protein is Protein wntless.